We begin with the raw amino-acid sequence, 781 residues long: Aconitate hydratase, mitochondrial (781 aa).

A mitochondrion-targeting transit peptide spans 1 to 27 (MAPYSLLVTRLQKALGVRQYHVASVLC). Position 28 is a pyrrolidone carboxylic acid (Q28). The residue at position 31 (K31) is an N6-succinyllysine. K50 carries the N6-acetyllysine; alternate modification. K50 bears the N6-succinyllysine; alternate mark. Q99 contributes to the substrate binding site. Residues K138 and K144 each carry the N6-acetyllysine; alternate modification. K138 and K144 each carry N6-succinyllysine; alternate. 192–194 (DSH) is a substrate binding site. An N6-acetyllysine; alternate modification is found at K233. N6-succinyllysine; alternate is present on K233. [4Fe-4S] cluster is bound at residue C385. Residue K411 is modified to N6-succinyllysine. C448 and C451 together coordinate [4Fe-4S] cluster. Positions 474 and 479 each coordinate substrate. 2 positions are modified to N6-acetyllysine; alternate: K517 and K523. Residues K517 and K523 each carry the N6-succinyllysine; alternate modification. Positions 524-537 (LEAPDADELPRAEF) are enriched in basic and acidic residues. Positions 524-561 (LEAPDADELPRAEFDPGQDTYQHPPKDSSGQRVDVSPT) are disordered. Position 549 is an N6-succinyllysine (K549). Residues 551 to 561 (SSGQRVDVSPT) are compositionally biased toward polar residues. S559 carries the post-translational modification Phosphoserine. The residue at position 573 (K573) is an N6-acetyllysine; alternate. An N6-succinyllysine; alternate modification is found at K573. An N6-succinyllysine mark is found at K577 and K591. K605 carries the post-translational modification N6-acetyllysine; alternate. Position 605 is an N6-succinyllysine; alternate (K605). R607 serves as a coordination point for substrate. N6-succinyllysine is present on K628. Phosphoserine is present on S670. 670–671 (SR) contacts substrate. K689 is subject to N6-succinyllysine. N6-acetyllysine; alternate occurs at positions 723 and 730. An N6-succinyllysine; alternate mark is found at K723 and K730. N6-acetyllysine occurs at positions 736, 739, and 743.

Belongs to the aconitase/IPM isomerase family. In terms of assembly, monomer. [4Fe-4S] cluster serves as cofactor. Forms covalent cross-links mediated by transglutaminase TGM2, between a glutamine and the epsilon-amino group of a lysine residue, forming homopolymers and heteropolymers.

The protein resides in the mitochondrion. It carries out the reaction citrate = D-threo-isocitrate. Its pathway is carbohydrate metabolism; tricarboxylic acid cycle; isocitrate from oxaloacetate: step 2/2. Its function is as follows. Catalyzes the isomerization of citrate to isocitrate via cis-aconitate. This is Aconitate hydratase, mitochondrial (ACO2) from Sus scrofa (Pig).